The chain runs to 236 residues: Syntaxin-8 (236 aa).

At 1–215 (MAPDPWFSTY…MVDRKSASCG (215 aa)) the chain is on the cytoplasmic side. The stretch at 42-65 (VTIRALLQNLKEKIALLKDLLLRA) forms a coiled coil. Residues 145 to 207 (QKIIQEQDAG…RNETRRVNMV (63 aa)) enclose the t-SNARE coiled-coil homology domain. Serine 160 is subject to Phosphoserine. A helical; Anchor for type IV membrane protein membrane pass occupies residues 216–232 (MIMVILLLLVAIVVVAV). The Vesicular segment spans residues 233-236 (WPTN).

It belongs to the syntaxin family. Forms a SNARE complex with STX7, VTI1B and VAMP8 which functions in the homotypic fusion of late endosomes. Part of the SNARE core complex containing STX7, VAMP8 and VTI1B. Interacts with VAMP8. Interacts with HECTD3. Interacts with TPC1. In terms of processing, ubiquitinated by HECTD3. In terms of tissue distribution, highly expressed in heart. Also found in brain, kidney, liver, lung, placenta, skeletal muscle, spleen and pancreas.

It is found in the membrane. In terms of biological role, vesicle trafficking protein that functions in the early secretory pathway, possibly by mediating retrograde transport from cis-Golgi membranes to the ER. The polypeptide is Syntaxin-8 (STX8) (Homo sapiens (Human)).